The following is a 111-amino-acid chain: MEAKAIGKTIRIAPRKVRLVVDLIRGKNVKEAQAILMFTPRGASPVIAKVLDSAIANRTHNLNLNLENLFVKEVWANESITMKRMLPRAKGSGHLIRKRTSHITVVVAERE.

This sequence belongs to the universal ribosomal protein uL22 family. In terms of assembly, part of the 50S ribosomal subunit.

Functionally, this protein binds specifically to 23S rRNA; its binding is stimulated by other ribosomal proteins, e.g. L4, L17, and L20. It is important during the early stages of 50S assembly. It makes multiple contacts with different domains of the 23S rRNA in the assembled 50S subunit and ribosome. In terms of biological role, the globular domain of the protein is located near the polypeptide exit tunnel on the outside of the subunit, while an extended beta-hairpin is found that lines the wall of the exit tunnel in the center of the 70S ribosome. This Acholeplasma laidlawii protein is Large ribosomal subunit protein uL22.